The sequence spans 250 residues: Cellulose biosynthesis protein BcsQ (250 aa).

9 to 16 provides a ligand contact to ATP; it reads VRGGVGTT.

This sequence belongs to the BcsQ family.

The protein localises to the cytoplasm. Essential for cellulose biosynthesis, shown for strain 1094, a commensal, natural cellulose producer. Also shown in strain W3110 which has a restored reading frame (TAG stop codon to TTG for amino acid 6, called strain AR3110), this protein. May play a role in subcellular localization of an active cellulose biosynthesis apparatus at the bacterial cell pole. The combination of cellulose and the curli fiber network confer cohesion, elasticity and tissue-like properties to colonies. This Escherichia coli (strain K12) protein is Cellulose biosynthesis protein BcsQ.